We begin with the raw amino-acid sequence, 34 residues long: Trypsin inhibitor 1 (34 aa).

A cross-link (cyclopeptide (Ser-Gly)) is located at residues 1 to 34; the sequence is SGSDGGVCPKILQRCRRDSDCPGACICRGNGYCG. Intrachain disulfides connect C8/C25, C15/C27, and C21/C33.

This is a cyclic peptide.

It is found in the secreted. Its function is as follows. Inhibits trypsin; probably participates in a plant defense mechanism. This is Trypsin inhibitor 1 from Momordica cochinchinensis (Spiny bitter cucumber).